The chain runs to 434 residues: Glutamyl-tRNA reductase (434 aa).

Residues 49–52 (TCNR), S109, 114–116 (EPQ), and Q120 each bind substrate. C50 acts as the Nucleophile in catalysis. 189-194 (GAGEMC) contributes to the NADP(+) binding site.

The protein belongs to the glutamyl-tRNA reductase family. In terms of assembly, homodimer.

It carries out the reaction (S)-4-amino-5-oxopentanoate + tRNA(Glu) + NADP(+) = L-glutamyl-tRNA(Glu) + NADPH + H(+). It participates in porphyrin-containing compound metabolism; protoporphyrin-IX biosynthesis; 5-aminolevulinate from L-glutamyl-tRNA(Glu): step 1/2. In terms of biological role, catalyzes the NADPH-dependent reduction of glutamyl-tRNA(Glu) to glutamate 1-semialdehyde (GSA). The sequence is that of Glutamyl-tRNA reductase from Geotalea daltonii (strain DSM 22248 / JCM 15807 / FRC-32) (Geobacter daltonii).